An 862-amino-acid chain; its full sequence is Taxadiene synthase (862 aa).

Positions 613, 617, 757, 761, and 765 each coordinate Mg(2+). The short motif at 613-617 is the DDXXD motif element; that stretch reads DDMAD.

Belongs to the terpene synthase family. Mg(2+) is required as a cofactor.

It catalyses the reaction (2E,6E,10E)-geranylgeranyl diphosphate = taxa-4(5),11(12)-diene + diphosphate. Its pathway is alkaloid biosynthesis; taxol biosynthesis; taxa-4(20),11-dien-5alpha-ol from geranylgeranyl diphosphate: step 1/2. In terms of biological role, catalyzes the cyclization of the ubiquitous isoprenoid intermediate geranylgeranyl diphosphate to taxa-4,11-diene, the parent olefin with a taxane skeleton. This Taxus brevifolia (Pacific yew) protein is Taxadiene synthase (TDC1).